The following is a 366-amino-acid chain: Aminomethyltransferase (366 aa).

This sequence belongs to the GcvT family. As to quaternary structure, the glycine cleavage system is composed of four proteins: P, T, L and H.

The catalysed reaction is N(6)-[(R)-S(8)-aminomethyldihydrolipoyl]-L-lysyl-[protein] + (6S)-5,6,7,8-tetrahydrofolate = N(6)-[(R)-dihydrolipoyl]-L-lysyl-[protein] + (6R)-5,10-methylene-5,6,7,8-tetrahydrofolate + NH4(+). In terms of biological role, the glycine cleavage system catalyzes the degradation of glycine. The polypeptide is Aminomethyltransferase (Bacillus cereus (strain G9842)).